Consider the following 317-residue polypeptide: Large ribosomal subunit protein uL10 (317 aa).

The interval 286 to 317 is disordered; it reads AGAGAAAEKKEEAKKEESESEEDDDMGFGLFD. Residues 292 to 302 show a composition bias toward basic and acidic residues; it reads AEKKEEAKKEE.

It belongs to the universal ribosomal protein uL10 family. In terms of assembly, P0 forms a pentameric complex by interaction with dimers of P1 and P2. Phosphorylated.

Its function is as follows. Ribosomal protein P0 is the functional equivalent of E.coli protein L10. This chain is Large ribosomal subunit protein uL10 (RpLP0), found in Ceratitis capitata (Mediterranean fruit fly).